The chain runs to 105 residues: Late embryogenesis abundant protein Lea5-D (105 aa).

Residues 48 to 67 (KVERRDAMKESSSSETRAYS) form a disordered region. A compositionally biased stretch (low complexity) spans 57 to 67 (ESSSSETRAYS).

The protein belongs to the LEA type 3 family.

This chain is Late embryogenesis abundant protein Lea5-D (LEA5-D), found in Gossypium hirsutum (Upland cotton).